Reading from the N-terminus, the 244-residue chain is Small ribosomal subunit protein uS2 (244 aa).

It belongs to the universal ribosomal protein uS2 family.

In Buchnera aphidicola subsp. Schizaphis graminum (strain Sg), this protein is Small ribosomal subunit protein uS2.